The sequence spans 146 residues: Large ribosomal subunit protein uL15 (146 aa).

The segment at 1–57 (MKLHELKPAQGSRKTRNRVGRGSSSGNGKTAGRGQKGQKARSGGNIRSGFEGGQTPL) is disordered. Residues 23 to 35 (SSSGNGKTAGRGQ) are compositionally biased toward gly residues.

This sequence belongs to the universal ribosomal protein uL15 family. As to quaternary structure, part of the 50S ribosomal subunit.

In terms of biological role, binds to the 23S rRNA. This Streptococcus mutans serotype c (strain ATCC 700610 / UA159) protein is Large ribosomal subunit protein uL15.